A 78-amino-acid polypeptide reads, in one-letter code: Translation initiation factor IF-1, chloroplastic (78 aa).

The S1-like domain maps to 1 to 72 (MKKQNLIEME…TKGRITYRLR (72 aa)).

The protein belongs to the IF-1 family. Component of the 30S ribosomal translation pre-initiation complex which assembles on the 30S ribosome in the order IF-2 and IF-3, IF-1 and N-formylmethionyl-tRNA(fMet); mRNA recruitment can occur at any time during PIC assembly.

Its subcellular location is the plastid. The protein resides in the chloroplast. Functionally, one of the essential components for the initiation of protein synthesis. Stabilizes the binding of IF-2 and IF-3 on the 30S subunit to which N-formylmethionyl-tRNA(fMet) subsequently binds. Helps modulate mRNA selection, yielding the 30S pre-initiation complex (PIC). Upon addition of the 50S ribosomal subunit IF-1, IF-2 and IF-3 are released leaving the mature 70S translation initiation complex. This Chaetosphaeridium globosum (Charophycean green alga) protein is Translation initiation factor IF-1, chloroplastic.